Consider the following 384-residue polypeptide: Small ribosomal subunit protein mS31 (384 aa).

A mitochondrion-targeting transit peptide spans 1 to 54; sequence MLHRIPAFLRPRPFSGLPLSCGNRDVSVAVLPAAQSGAVRTENNIQRHFCTSRS. The disordered stretch occupies residues 101–136; that stretch reads TANVKTPKPRGRKPSASLEATVDRLQKAPEDPPKKR. The segment covering 121 to 136 has biased composition (basic and acidic residues); sequence TVDRLQKAPEDPPKKR.

The protein belongs to the mitochondrion-specific ribosomal protein mS31 family. As to quaternary structure, component of the mitochondrial ribosome small subunit (28S) which comprises a 12S rRNA and about 30 distinct proteins.

The protein localises to the mitochondrion. This Mus musculus (Mouse) protein is Small ribosomal subunit protein mS31 (Mrps31).